A 476-amino-acid chain; its full sequence is ATP synthase subunit beta (476 aa).

154–161 (GGAGVGKT) lines the ATP pocket.

Belongs to the ATPase alpha/beta chains family. As to quaternary structure, F-type ATPases have 2 components, CF(1) - the catalytic core - and CF(0) - the membrane proton channel. CF(1) has five subunits: alpha(3), beta(3), gamma(1), delta(1), epsilon(1). CF(0) has three main subunits: a(1), b(2) and c(9-12). The alpha and beta chains form an alternating ring which encloses part of the gamma chain. CF(1) is attached to CF(0) by a central stalk formed by the gamma and epsilon chains, while a peripheral stalk is formed by the delta and b chains.

It localises to the cell inner membrane. It catalyses the reaction ATP + H2O + 4 H(+)(in) = ADP + phosphate + 5 H(+)(out). In terms of biological role, produces ATP from ADP in the presence of a proton gradient across the membrane. The catalytic sites are hosted primarily by the beta subunits. The chain is ATP synthase subunit beta from Afipia carboxidovorans (strain ATCC 49405 / DSM 1227 / KCTC 32145 / OM5) (Oligotropha carboxidovorans).